The sequence spans 61 residues: Putative antitoxin VapB21 (61 aa).

The protein belongs to the UPF0165 family.

In terms of biological role, possibly the antitoxin component of a type II toxin-antitoxin (TA) system. Its cognate toxin is VapC21 (Potential). The sequence is that of Putative antitoxin VapB21 (vapB21) from Archaeoglobus fulgidus (strain ATCC 49558 / DSM 4304 / JCM 9628 / NBRC 100126 / VC-16).